Reading from the N-terminus, the 631-residue chain is Dolichyl-diphosphooligosaccharide--protein glycosyltransferase subunit 2 (631 aa).

The N-terminal stretch at 1 to 22 (MAPPGSSAVFLLALTITASVQA) is a signal peptide. At 23–540 (LTPTHYLTKQ…REPEKRPPTV (518 aa)) the chain is on the lumenal side. N-linked (GlcNAc...) asparagine glycosylation occurs at Asn-106. A Glycyl lysine isopeptide (Lys-Gly) (interchain with G-Cter in ubiquitin) cross-link involves residue Lys-154. Residues 541–561 (VSNTFTALILSPLLLLFALWI) traverse the membrane as a helical segment. Over 562–571 (RIGANVSNFT) the chain is Cytoplasmic. The helical transmembrane segment at 572–592 (FAPSTVIFHLGHAAMLGLMYI) threads the bilayer. At 593–596 (YWTQ) the chain is on the lumenal side. A helical transmembrane segment spans residues 597–617 (LNMFQTLKYLAVLGTVTFLAG). At 618–631 (NRMLAQHAVKRTAH) the chain is on the cytoplasmic side.

This sequence belongs to the SWP1 family. Component of the oligosaccharyltransferase (OST) complex. OST exists in two different complex forms which contain common core subunits RPN1, RPN2, OST48, OST4, DAD1 and TMEM258, either STT3A or STT3B as catalytic subunits, and form-specific accessory subunits. STT3A complex assembly occurs through the formation of 3 subcomplexes. Subcomplex 1 contains RPN1 and TMEM258, subcomplex 2 contains the STT3A-specific subunits STT3A, DC2/OSTC, and KCP2 as well as the core subunit OST4, and subcomplex 3 contains RPN2, DAD1, and OST48. The STT3A complex can form stable complexes with the Sec61 complex or with both the Sec61 and TRAP complexes. Interacts with DDI2. Interacts with TMEM35A/NACHO.

It is found in the endoplasmic reticulum. The protein localises to the endoplasmic reticulum membrane. It participates in protein modification; protein glycosylation. In terms of biological role, subunit of the oligosaccharyl transferase (OST) complex that catalyzes the initial transfer of a defined glycan (Glc(3)Man(9)GlcNAc(2) in eukaryotes) from the lipid carrier dolichol-pyrophosphate to an asparagine residue within an Asn-X-Ser/Thr consensus motif in nascent polypeptide chains, the first step in protein N-glycosylation. N-glycosylation occurs cotranslationally and the complex associates with the Sec61 complex at the channel-forming translocon complex that mediates protein translocation across the endoplasmic reticulum (ER). All subunits are required for a maximal enzyme activity. The sequence is that of Dolichyl-diphosphooligosaccharide--protein glycosyltransferase subunit 2 from Mus musculus (Mouse).